The following is a 101-amino-acid chain: Putative pterin-4-alpha-carbinolamine dehydratase (101 aa).

The protein belongs to the pterin-4-alpha-carbinolamine dehydratase family.

The enzyme catalyses (4aS,6R)-4a-hydroxy-L-erythro-5,6,7,8-tetrahydrobiopterin = (6R)-L-erythro-6,7-dihydrobiopterin + H2O. This is Putative pterin-4-alpha-carbinolamine dehydratase from Streptomyces coelicolor (strain ATCC BAA-471 / A3(2) / M145).